Reading from the N-terminus, the 631-residue chain is 1-deoxy-D-xylulose-5-phosphate synthase (631 aa).

Residues histidine 87 and 128–130 contribute to the thiamine diphosphate site; that span reads GHS. Aspartate 159 contacts Mg(2+). Thiamine diphosphate-binding positions include 160-161, asparagine 188, phenylalanine 295, and glutamate 377; that span reads GA. A Mg(2+)-binding site is contributed by asparagine 188.

This sequence belongs to the transketolase family. DXPS subfamily. Homodimer. Mg(2+) is required as a cofactor. Thiamine diphosphate serves as cofactor.

It carries out the reaction D-glyceraldehyde 3-phosphate + pyruvate + H(+) = 1-deoxy-D-xylulose 5-phosphate + CO2. It functions in the pathway metabolic intermediate biosynthesis; 1-deoxy-D-xylulose 5-phosphate biosynthesis; 1-deoxy-D-xylulose 5-phosphate from D-glyceraldehyde 3-phosphate and pyruvate: step 1/1. Its function is as follows. Catalyzes the acyloin condensation reaction between C atoms 2 and 3 of pyruvate and glyceraldehyde 3-phosphate to yield 1-deoxy-D-xylulose-5-phosphate (DXP). In Pseudomonas putida (strain ATCC 47054 / DSM 6125 / CFBP 8728 / NCIMB 11950 / KT2440), this protein is 1-deoxy-D-xylulose-5-phosphate synthase.